Consider the following 392-residue polypeptide: Obg-like ATPase 1 (392 aa).

One can recognise an OBG-type G domain in the interval 21-285 (LKTGIVGMPN…FTEEEAIEEC (265 aa)). 30 to 35 (NVGKST) serves as a coordination point for ATP. Positions 34 and 55 each coordinate Mg(2+). Methionine 233 is an ATP binding site. Residues 306–389 (NLINYFTCGE…ESGDIAHWKA (84 aa)) enclose the TGS domain.

Belongs to the TRAFAC class OBG-HflX-like GTPase superfamily. OBG GTPase family. YchF/OLA1 subfamily. Monomer. Mg(2+) serves as cofactor.

It is found in the cytoplasm. The protein resides in the nucleus. Hydrolyzes ATP, and can also hydrolyze GTP with lower efficiency. Has lower affinity for GTP. Negatively regulates the G2/M transition in the cell cycle. The polypeptide is Obg-like ATPase 1 (Schizosaccharomyces pombe (strain 972 / ATCC 24843) (Fission yeast)).